Consider the following 146-residue polypeptide: Acidic phospholipase A2 2 (146 aa).

The N-terminal stretch at 1–21 (MTPAHLLILAAVCVSPLGASS) is a signal peptide. A propeptide spanning residues 22-27 (SRPMPL) is cleaved from the precursor. Disulfide bonds link C38-C98, C53-C145, C55-C71, C70-C126, C77-C119, C87-C112, and C105-C117. The Ca(2+) site is built by Y54, G56, and G58. The active site involves H74. Residue D75 coordinates Ca(2+). D120 is an active-site residue.

Belongs to the phospholipase A2 family. Group I subfamily. D49 sub-subfamily. Ca(2+) serves as cofactor. As to expression, expressed by the venom gland.

It localises to the secreted. It carries out the reaction a 1,2-diacyl-sn-glycero-3-phosphocholine + H2O = a 1-acyl-sn-glycero-3-phosphocholine + a fatty acid + H(+). Functionally, PLA2 catalyzes the calcium-dependent hydrolysis of the 2-acyl groups in 3-sn-phosphoglycerides. The sequence is that of Acidic phospholipase A2 2 from Naja atra (Chinese cobra).